Here is a 337-residue protein sequence, read N- to C-terminus: Lipopolysaccharide 1,3-galactosyltransferase (337 aa).

UDP contacts are provided by residues 33-38 (GIDKNF) and 130-131 (DA). Residues aspartate 130 and aspartate 132 each contribute to the Mg(2+) site. Short sequence motifs (DXD) lie at residues 130 to 132 (DAD) and 219 to 221 (DQD). Histidine 264 serves as a coordination point for Mg(2+). 264–270 (HYIGPTK) is a binding site for UDP.

The protein belongs to the glycosyltransferase 8 family. It depends on Mg(2+) as a cofactor.

The catalysed reaction is UDP-alpha-D-galactose + [lipopolysaccharide] = UDP + 3-alpha-D-galactosyl-[lipopolysaccharide].. The protein operates within bacterial outer membrane biogenesis; LPS core biosynthesis. Inhibited in a competitive manner by closely related nonsubstrate lipopolysaccharides. Functionally, galactosyltransferase involved in the biosynthesis of the core oligosaccharide region of lipopolysaccharide (LPS). Catalyzes the addition of an alpha l,3-linked galactose (galactose I) to the first outer-core glucose (glucose I). Cannot use UDP-glucose. Activity probably does not require the branched galactose added by WaaB, but it is higher in the presence of this branched galactose. The sequence is that of Lipopolysaccharide 1,3-galactosyltransferase from Salmonella typhimurium (strain LT2 / SGSC1412 / ATCC 700720).